The chain runs to 265 residues: Glutamate racemase (265 aa).

Substrate is bound by residues 12–13 (DS) and 44–45 (YG). The active-site Proton donor/acceptor is the Cys-75. 76–77 (NT) is a binding site for substrate. The Proton donor/acceptor role is filled by Cys-186. 187–188 (TH) contributes to the substrate binding site.

It belongs to the aspartate/glutamate racemases family.

The catalysed reaction is L-glutamate = D-glutamate. The protein operates within cell wall biogenesis; peptidoglycan biosynthesis. Functionally, provides the (R)-glutamate required for cell wall biosynthesis. This Pseudomonas aeruginosa (strain ATCC 15692 / DSM 22644 / CIP 104116 / JCM 14847 / LMG 12228 / 1C / PRS 101 / PAO1) protein is Glutamate racemase.